Reading from the N-terminus, the 308-residue chain is Ribosomal RNA small subunit methyltransferase H (308 aa).

S-adenosyl-L-methionine-binding positions include 36–38 (GGH), aspartate 55, phenylalanine 86, aspartate 103, and glutamine 110.

This sequence belongs to the methyltransferase superfamily. RsmH family.

The protein resides in the cytoplasm. The catalysed reaction is cytidine(1402) in 16S rRNA + S-adenosyl-L-methionine = N(4)-methylcytidine(1402) in 16S rRNA + S-adenosyl-L-homocysteine + H(+). Specifically methylates the N4 position of cytidine in position 1402 (C1402) of 16S rRNA. The polypeptide is Ribosomal RNA small subunit methyltransferase H (Helicobacter pylori (strain Shi470)).